We begin with the raw amino-acid sequence, 187 residues long: Resolvase OPG149 (187 aa).

Belongs to the RuvC family. Poxviruses-type subfamily. It depends on Mg(2+) as a cofactor.

In terms of biological role, plays a role in DNA replication by cleaving viral DNA concatamers to yield unit-length viral genomes. The concatamer junctions contain inverted repeat sequences that can be extruded as cruciforms, yielding Holliday junctions that A22 protein cleaves. The polypeptide is Resolvase OPG149 (OPG149) (Cynomys gunnisoni (Gunnison's prairie dog)).